The primary structure comprises 254 residues: Tyrosine-protein phosphatase YwqE (254 aa).

The protein belongs to the metallo-dependent hydrolases superfamily. CpsB/CapC family. Requires Mn(2+) as cofactor.

The enzyme catalyses O-phospho-L-tyrosyl-[protein] + H2O = L-tyrosyl-[protein] + phosphate. Inhibited by vanadate and sodium pyrophosphate. Not inhibited by sodium fluoride. In terms of biological role, dephosphorylates the phosphotyrosine-containing proteins YwqD, YwqF and Ssb. This is Tyrosine-protein phosphatase YwqE (ywqE) from Bacillus subtilis (strain 168).